Here is a 1222-residue protein sequence, read N- to C-terminus: Deubiquitinating protein VCPIP1 (1222 aa).

Residues 1–21 show a composition bias toward pro residues; it reads MSQPPPPPPPLPPPPPPPEAP. Residues 1–36 are disordered; that stretch reads MSQPPPPPPPLPPPPPPPEAPQTPSSLASAAASGGL. A compositionally biased stretch (low complexity) spans 25–36; sequence SSLASAAASGGL. Residues 208–361 form the OTU domain; the sequence is LIPVHVDGDG…RNHYIPLVGI (154 aa). Residue aspartate 216 is part of the active site. Cysteine 219 (nucleophile) is an active-site residue. Histidine 354 is an active-site residue. An N6-acetyllysine modification is found at lysine 408. Disordered regions lie at residues 725-776, 989-1009, and 1024-1074; these read SVMQ…KEKK, EATTRSRESSPSHGLLKLGSG, and AFQG…VFTA. Serine 747 and serine 757 each carry phosphoserine. Over residues 755 to 771 the composition is skewed to low complexity; the sequence is PSSAPATPTKAPYSPTT. Threonine 763 carries the post-translational modification Phosphothreonine. Phosphoserine is present on residues serine 768, serine 994, and serine 998. Residues 1041–1050 are compositionally biased toward basic and acidic residues; that stretch reads LDPRARETSV. Over residues 1057–1074 the composition is skewed to polar residues; it reads GTDFSNSSTKTEPSVFTA. Serine 1077 bears the Phosphoserine mark. Disordered regions lie at residues 1113-1175 and 1188-1222; these read VSSI…TETT and ATRSKAQRGNSVEELEEMDSQDAEMTNTTEPMDHS. Positions 1143–1157 are enriched in polar residues; sequence VVSSSAKSGSLQTGL. Residues 1163 to 1175 are compositionally biased toward low complexity; it reads LTGGTENLNTETT. A Phosphoserine modification is found at serine 1198. Acidic residues predominate over residues 1200–1209; it reads EELEEMDSQD. Serine 1207 is subject to Phosphoserine; by ATM. The span at 1210-1222 shows a compositional bias: polar residues; the sequence is AEMTNTTEPMDHS.

In terms of assembly, binds VCP and the ternary complex containing STX5A, NSFL1C and VCP. Phosphorylated at Ser-1207 by ATM or ATR following induction of covalent DNA-protein cross-links (DPCs).

The protein localises to the nucleus. Its subcellular location is the cytoplasm. It localises to the endoplasmic reticulum. The protein resides in the golgi apparatus. It is found in the golgi stack. It catalyses the reaction Thiol-dependent hydrolysis of ester, thioester, amide, peptide and isopeptide bonds formed by the C-terminal Gly of ubiquitin (a 76-residue protein attached to proteins as an intracellular targeting signal).. Functionally, deubiquitinating enzyme involved in DNA repair and reassembly of the Golgi apparatus and the endoplasmic reticulum following mitosis. Necessary for VCP-mediated reassembly of Golgi stacks after mitosis. Plays a role in VCP-mediated formation of transitional endoplasmic reticulum (tER). Mediates dissociation of the ternary complex containing STX5A, NSFL1C and VCP. Also involved in DNA repair following phosphorylation by ATM or ATR: acts by catalyzing deubiquitination of SPRTN, thereby promoting SPRTN recruitment to chromatin and subsequent proteolytic cleavage of covalent DNA-protein cross-links (DPCs). Hydrolyzes 'Lys-11'- and 'Lys-48'-linked polyubiquitin chains. In terms of biological role, (Microbial infection) Regulates the duration of C.botulinum neurotoxin type A (BoNT/A) intoxication by catalyzing deubiquitination of Botulinum neurotoxin A light chain (LC), thereby preventing LC degradation by the proteasome, and accelerating botulinum neurotoxin intoxication in patients. The protein is Deubiquitinating protein VCPIP1 of Homo sapiens (Human).